The chain runs to 413 residues: Tyrosine--tRNA ligase (413 aa).

Residues 59 to 68 (PTAPDIHLGH) carry the 'HIGH' region motif. A 'KMSKS' region motif is present at residues 243-247 (KMSKS). Position 246 (Lys246) interacts with ATP. Residues 351 to 411 (LAIGQLLKQA…GKRRFARVTL (61 aa)) form the S4 RNA-binding domain.

It belongs to the class-I aminoacyl-tRNA synthetase family. TyrS type 2 subfamily. As to quaternary structure, homodimer.

It localises to the cytoplasm. It carries out the reaction tRNA(Tyr) + L-tyrosine + ATP = L-tyrosyl-tRNA(Tyr) + AMP + diphosphate + H(+). Catalyzes the attachment of tyrosine to tRNA(Tyr) in a two-step reaction: tyrosine is first activated by ATP to form Tyr-AMP and then transferred to the acceptor end of tRNA(Tyr). In Burkholderia pseudomallei (strain 1710b), this protein is Tyrosine--tRNA ligase.